The primary structure comprises 298 residues: MENFQKVEKIGEGTYGVVYKAKNKLTGEVVALKKIRLDTETEGVPSTAIREISLLKELNHPNIVKLLDVIHTENKLYLVFEFLHQDLKKFMDASALTGLPLPLIKSYLFQLLQGLAFCHSHRVLHRDLKPQNLLINAEGSIKLADFGLARAFGVPVRTYTHEVVTLWYRAPEILLGCKYYSTAVDIWSLGCIFAEMVTRRALFPGDSEIDQLFRIFRTLGTPDEVVWPGVTSMPDYKPSFPKWARQDFSKVVPPLDEDGRSLLSQMLHYDPNKRISAKAALAHPFFQDVTKPVPHLRL.

Met-1 carries the post-translational modification N-acetylmethionine. The Protein kinase domain maps to Phe-4–Phe-286. Lys-6 is subject to N6-acetyllysine. Ile-10 to Val-18 is an ATP binding site. At Thr-14 the chain carries Phosphothreonine. Tyr-15 bears the Phosphotyrosine; by WEE1 mark. Tyr-19 is modified (phosphotyrosine). ATP-binding positions include Lys-33, Glu-81–Leu-83, and Asp-86. Asp-127 functions as the Proton acceptor in the catalytic mechanism. Residues Lys-129 to Asn-132 and Asp-145 contribute to the ATP site. Mg(2+) contacts are provided by Asn-132 and Asp-145. A Phosphothreonine; by CAK and CCRK modification is found at Thr-160.

It belongs to the protein kinase superfamily. CMGC Ser/Thr protein kinase family. CDC2/CDKX subfamily. In terms of assembly, found in a complex with CABLES1, CCNA1 and CCNE1. Interacts with CABLES1. Interacts with UHRF2. Part of a complex consisting of UHRF2, CDK2 and CCNE1. Interacts with the Speedy/Ringo proteins SPDYA and SPDYC. Interaction with SPDYA promotes kinase activation via a conformation change that alleviates obstruction of the substrate-binding cleft by the T-loop. Found in a complex with both SPDYA and CDKN1B/KIP1. Binds to RB1. Binds to CDK7. Binding to CDKN1A (p21) leads to CDK2/cyclin E inactivation at the G1-S phase DNA damage checkpoint, thereby arresting cells at the G1-S transition during DNA repair. Associated with PTPN6 and beta-catenin/CTNNB1. Interacts with CACUL1. May interact with CEP63. Interacts with ANKRD17. Interacts with CEBPA (when phosphorylated). Forms a ternary complex with CCNA2 and CDKN1B; CDKN1B inhibits the kinase activity of CDK2 through conformational rearrangements. Interacts with cyclins A, B1, B3, D, or E. Interacts with CDK2AP2. The cofactor is Mg(2+). Phosphorylated at Thr-160 by CDK7 in a CAK complex. Phosphorylation at Thr-160 promotes kinase activity, whereas phosphorylation at Tyr-15 by WEE1 reduces slightly kinase activity. Phosphorylated on Thr-14 and Tyr-15 during S and G2 phases before being dephosphorylated by CDC25A. Post-translationally, nitrosylated after treatment with nitric oxide (DETA-NO).

Its subcellular location is the cytoplasm. It is found in the cytoskeleton. The protein resides in the microtubule organizing center. It localises to the centrosome. The protein localises to the nucleus. Its subcellular location is the cajal body. It is found in the endosome. It carries out the reaction L-seryl-[protein] + ATP = O-phospho-L-seryl-[protein] + ADP + H(+). The catalysed reaction is L-threonyl-[protein] + ATP = O-phospho-L-threonyl-[protein] + ADP + H(+). Phosphorylation at Thr-14 or Tyr-15 inactivates the enzyme, while phosphorylation at Thr-160 activates it. Stimulated by MYC. Inactivated by CDKN1A (p21). Its function is as follows. Serine/threonine-protein kinase involved in the control of the cell cycle; essential for meiosis, but dispensable for mitosis. Phosphorylates CABLES1, CTNNB1, CDK2AP2, ERCC6, NBN, USP37, p53/TP53, NPM1, CDK7, RB1, BRCA2, MYC, NPAT, EZH2. Triggers duplication of centrosomes and DNA. Acts at the G1-S transition to promote the E2F transcriptional program and the initiation of DNA synthesis, and modulates G2 progression; controls the timing of entry into mitosis/meiosis by controlling the subsequent activation of cyclin B/CDK1 by phosphorylation, and coordinates the activation of cyclin B/CDK1 at the centrosome and in the nucleus. Crucial role in orchestrating a fine balance between cellular proliferation, cell death, and DNA repair in embryonic stem cells (ESCs). Activity of CDK2 is maximal during S phase and G2; activated by interaction with cyclin E during the early stages of DNA synthesis to permit G1-S transition, and subsequently activated by cyclin A2 (cyclin A1 in germ cells) during the late stages of DNA replication to drive the transition from S phase to mitosis, the G2 phase. EZH2 phosphorylation promotes H3K27me3 maintenance and epigenetic gene silencing. Cyclin E/CDK2 prevents oxidative stress-mediated Ras-induced senescence by phosphorylating MYC. Involved in G1-S phase DNA damage checkpoint that prevents cells with damaged DNA from initiating mitosis; regulates homologous recombination-dependent repair by phosphorylating BRCA2, this phosphorylation is low in S phase when recombination is active, but increases as cells progress towards mitosis. In response to DNA damage, double-strand break repair by homologous recombination a reduction of CDK2-mediated BRCA2 phosphorylation. Involved in regulation of telomere repair by mediating phosphorylation of NBN. Phosphorylation of RB1 disturbs its interaction with E2F1. NPM1 phosphorylation by cyclin E/CDK2 promotes its dissociation from unduplicated centrosomes, thus initiating centrosome duplication. Cyclin E/CDK2-mediated phosphorylation of NPAT at G1-S transition and until prophase stimulates the NPAT-mediated activation of histone gene transcription during S phase. Required for vitamin D-mediated growth inhibition by being itself inactivated. Involved in the nitric oxide- (NO) mediated signaling in a nitrosylation/activation-dependent manner. USP37 is activated by phosphorylation and thus triggers G1-S transition. CTNNB1 phosphorylation regulates insulin internalization. Phosphorylates FOXP3 and negatively regulates its transcriptional activity and protein stability. Phosphorylates ERCC6 which is essential for its chromatin remodeling activity at DNA double-strand breaks. Acts as a regulator of the phosphatidylinositol 3-kinase/protein kinase B signal transduction by mediating phosphorylation of the C-terminus of protein kinase B (PKB/AKT1 and PKB/AKT2), promoting its activation. This chain is Cyclin-dependent kinase 2 (Cdk2), found in Rattus norvegicus (Rat).